Here is a 231-residue protein sequence, read N- to C-terminus: 7-cyano-7-deazaguanine synthase (231 aa).

L7–L17 is a binding site for ATP. Residues C195, C203, C206, and C209 each contribute to the Zn(2+) site.

This sequence belongs to the QueC family. It depends on Zn(2+) as a cofactor.

The enzyme catalyses 7-carboxy-7-deazaguanine + NH4(+) + ATP = 7-cyano-7-deazaguanine + ADP + phosphate + H2O + H(+). The protein operates within purine metabolism; 7-cyano-7-deazaguanine biosynthesis. Catalyzes the ATP-dependent conversion of 7-carboxy-7-deazaguanine (CDG) to 7-cyano-7-deazaguanine (preQ(0)). The polypeptide is 7-cyano-7-deazaguanine synthase (Methanosarcina mazei (strain ATCC BAA-159 / DSM 3647 / Goe1 / Go1 / JCM 11833 / OCM 88) (Methanosarcina frisia)).